The primary structure comprises 323 residues: Ribonuclease Z (323 aa).

Zn(2+)-binding residues include histidine 62, histidine 64, aspartate 66, histidine 67, histidine 140, aspartate 211, and histidine 270. Aspartate 66 functions as the Proton acceptor in the catalytic mechanism.

This sequence belongs to the RNase Z family. Homodimer. Requires Zn(2+) as cofactor.

The catalysed reaction is Endonucleolytic cleavage of RNA, removing extra 3' nucleotides from tRNA precursor, generating 3' termini of tRNAs. A 3'-hydroxy group is left at the tRNA terminus and a 5'-phosphoryl group is left at the trailer molecule.. Functionally, zinc phosphodiesterase, which displays some tRNA 3'-processing endonuclease activity. Probably involved in tRNA maturation, by removing a 3'-trailer from precursor tRNA. The chain is Ribonuclease Z from Marinobacter nauticus (strain ATCC 700491 / DSM 11845 / VT8) (Marinobacter aquaeolei).